The chain runs to 152 residues: Interleukin-3 (152 aa).

The signal sequence occupies residues Met1–Gln19. Residues Asn34 and Asn89 are each glycosylated (N-linked (GlcNAc...) asparagine). Cys35 and Cys103 form a disulfide bridge.

Belongs to the IL-3 family. Monomer. Activated T-cells, mast cells, natural killer cells.

The protein resides in the secreted. Its function is as follows. Granulocyte/macrophage colony-stimulating factors are cytokines that act in hematopoiesis by controlling the production, differentiation, and function of 2 related white cell populations of the blood, the granulocytes and the monocytes-macrophages. This CSF induces granulocytes, macrophages, mast cells, stem cells, erythroid cells, eosinophils and megakaryocytes. This chain is Interleukin-3 (IL3), found in Pan troglodytes (Chimpanzee).